The primary structure comprises 250 residues: Small ribosomal subunit protein uS2 (250 aa).

It belongs to the universal ribosomal protein uS2 family.

This Variovorax paradoxus (strain S110) protein is Small ribosomal subunit protein uS2.